A 255-amino-acid chain; its full sequence is Thiazole synthase (255 aa).

Lysine 95 (schiff-base intermediate with DXP) is an active-site residue. 1-deoxy-D-xylulose 5-phosphate is bound by residues glycine 156, 182 to 183, and 204 to 205; these read AG and NT.

This sequence belongs to the ThiG family. Homotetramer. Forms heterodimers with either ThiH or ThiS.

Its subcellular location is the cytoplasm. The catalysed reaction is [ThiS sulfur-carrier protein]-C-terminal-Gly-aminoethanethioate + 2-iminoacetate + 1-deoxy-D-xylulose 5-phosphate = [ThiS sulfur-carrier protein]-C-terminal Gly-Gly + 2-[(2R,5Z)-2-carboxy-4-methylthiazol-5(2H)-ylidene]ethyl phosphate + 2 H2O + H(+). It functions in the pathway cofactor biosynthesis; thiamine diphosphate biosynthesis. Functionally, catalyzes the rearrangement of 1-deoxy-D-xylulose 5-phosphate (DXP) to produce the thiazole phosphate moiety of thiamine. Sulfur is provided by the thiocarboxylate moiety of the carrier protein ThiS. In vitro, sulfur can be provided by H(2)S. This Vibrio parahaemolyticus serotype O3:K6 (strain RIMD 2210633) protein is Thiazole synthase.